The chain runs to 1634 residues: Actin cytoskeleton-regulatory complex protein PAN1 (1634 aa).

Over residues 1–11 the composition is skewed to gly residues; sequence MYGYQGTGGQQ. Positions 1 to 215 are disordered; sequence MYGYQGTGGQ…QPTGGGNKSV (215 aa). 2 stretches are compositionally biased toward low complexity: residues 28–42 and 55–74; these read QQQQ…QSQP and QPTG…TGFQ. The span at 75-93 shows a compositional bias: polar residues; sequence SMQPPMQQTGFQSQPNVSM. The segment covering 110–180 has biased composition (low complexity); the sequence is QQTMQTGYQP…SAPAATPAAP (71 aa). Residues 233 to 322 form the EH 1 domain; that stretch reads DQRNFENLFR…ENIKNEVSSM (90 aa). An EF-hand 1 domain is found at 266–301; it reads LPPITLSAIWNLADTTRSGALLFPEFAVAMYLCGQA. Disordered stretches follow at residues 330–471 and 492–522; these read IPDA…QQST and GYMP…TGKP. Composition is skewed to low complexity over residues 335–359 and 368–386; these read SRPS…SSAS and QPTG…MQQQ. Polar residues-rich tracts occupy residues 387–471 and 492–513; these read STGY…QQST and GYMP…SMQP. Residues 576–665 enclose the EH 2 domain; sequence EKQIYDGIFM…PELVPPSSKN (90 aa). Residues 609-644 enclose the EF-hand 2 domain; sequence LNRADLEAIWTLSDPSNKGRLDRDEFAVAMHLIYRH. Positions 711 to 744 are disordered; the sequence is DSDFGYTSRNRRGGSSSTASSNGSSGNDISLSGK. Over residues 723-737 the composition is skewed to low complexity; it reads GGSSSTASSNGSSGN. Coiled-coil stretches lie at residues 748 to 803 and 831 to 859; these read ISEL…IDVA and DRLP…RLKN. Disordered regions lie at residues 946 to 965 and 985 to 1634; these read LSSK…QRRR and STRS…AVLN. Positions 985 to 1028 are enriched in low complexity; sequence STRSSRPAPATASSSAPATGSPATAAPISATSTGASTPSAPAAG. Over residues 1029–1045 the composition is skewed to basic and acidic residues; sequence VDRKAQLKAEAERKMNE. The segment covering 1071 to 1129 has biased composition (low complexity); sequence AEASPAASPAVASPAVASPAATPAVSSPAPVSRGVPAPAAATPATDPATTPAVPVSAPA. Residues 1130–1139 show a composition bias toward acidic residues; the sequence is DDSDSDDEEY. Residues 1131 to 1198 are a coiled coil; it reads DSDSDDEEYE…EAREKAWKES (68 aa). Basic and acidic residues predominate over residues 1140-1203; sequence EKLMAQKREQ…AWKESQSKEA (64 aa). Composition is skewed to low complexity over residues 1211–1255, 1265–1284, and 1293–1304; these read DVGA…VPAA, NNGG…DNNP, and PIAAPSPASFSE. Residues 1331-1345 are compositionally biased toward acidic residues; it reads DDDDWGMSSDEDDDQ. Over residues 1371-1386 the composition is skewed to low complexity; the sequence is PTGGAPITATPTGSAP. Over residues 1387-1396 the composition is skewed to pro residues; that stretch reads AAPPAAPPVA. Residues 1397–1413 are compositionally biased toward low complexity; the sequence is PAAVEVAVAASEATPGP. Positions 1414–1423 are enriched in pro residues; the sequence is ESAPPAPPMP. Low complexity predominate over residues 1424-1442; sequence EINIPPATEAPSAPAATEA. Positions 1494–1503 are enriched in pro residues; the sequence is VAAPPPPPPT. Residues 1520-1529 show a composition bias toward low complexity; sequence PGFGAPEAPS. 2 stretches are compositionally biased toward pro residues: residues 1530 to 1551 and 1559 to 1581; these read GIPP…PGPA and GAPP…PPSM. Positions 1599–1616 constitute a WH2 domain; it reads GITALLGEITGGKTLRRV. A compositionally biased stretch (basic and acidic residues) spans 1614–1623; that stretch reads RRVDDKDKKI.

Belongs to the PAN1 family. As to quaternary structure, component of the PAN1 actin cytoskeleton-regulatory complex.

It is found in the cell membrane. It localises to the endosome membrane. The protein localises to the cytoplasm. Its subcellular location is the cytoskeleton. The protein resides in the actin patch. Its function is as follows. Component of the PAN1 actin cytoskeleton-regulatory complex required for the internalization of endosomes during actin-coupled endocytosis. The complex links the site of endocytosis to the cell membrane-associated actin cytoskeleton. Mediates uptake of external molecules and vacuolar degradation of plasma membrane proteins. Plays a role in the proper organization of the cell membrane-associated actin cytoskeleton and promotes its destabilization. In Yarrowia lipolytica (strain CLIB 122 / E 150) (Yeast), this protein is Actin cytoskeleton-regulatory complex protein PAN1 (PAN1).